The primary structure comprises 555 residues: Inorganic phosphate transporter 1-11 (555 aa).

Residues 1–28 are Cytoplasmic-facing; sequence MADADGGSNLAVLDALDSARTQMYHMKA. The helical transmembrane segment at 29-49 threads the bilayer; it reads IVIAGMGFFTDAYDLFCISTV. The Extracellular portion of the chain corresponds to 50–77; it reads SKLLGRLYYQPDGSTDSKPGALSKTANN. Residues 78-98 form a helical membrane-spanning segment; sequence MVIGVALVGTLMGQLVFGYFG. Residues 99-105 lie on the Cytoplasmic side of the membrane; sequence DKLGRKR. Residues 106 to 126 form a helical membrane-spanning segment; that stretch reads VYGVTLILMAACAIGSGLSFG. At 127–130 the chain is on the extracellular side; it reads SSRK. Residues 131–151 traverse the membrane as a helical segment; that stretch reads AVIGTLCFFRFWLGFGIGGDY. The Cytoplasmic portion of the chain corresponds to 152–167; the sequence is PLSATIMSEYSNKKTR. The helical transmembrane segment at 168–188 threads the bilayer; the sequence is GAFIAAVFAMQGVGIIFAGLV. The Extracellular segment spans residues 189-216; it reads SMIVSSIFLTYNKAPSYKGNHDLSRQMP. The helical transmembrane segment at 217–237 threads the bilayer; that stretch reads AADYVWRIVLMIGAFPALATF. Over 238–298 the chain is Cytoplasmic; that stretch reads YWRMKMPETA…PLLSMEFARR (61 aa). Residues 299-319 traverse the membrane as a helical segment; it reads HGLHLIGTTTTWFLLDIAFYS. The Extracellular segment spans residues 320–351; sequence QNLTQKDIFPAMGLISGAAEVNALTEMFQISK. Residues 352–372 form a helical membrane-spanning segment; sequence ASFLVALLGTFPGYWVTVALI. At 373-377 the chain is on the cytoplasmic side; the sequence is DKMGR. A helical membrane pass occupies residues 378–398; sequence YMIQLIGFFMMSMFMLAMGIL. Residues 399-408 lie on the Extracellular side of the membrane; sequence YDYLKTHHFL. Residues 409–436 form a helical membrane-spanning segment; the sequence is FGLLYALTFFFANFGPNSTTFVLPAELF. The Cytoplasmic portion of the chain corresponds to 437-442; the sequence is PTRVRS. Residues 443–463 form a helical membrane-spanning segment; it reads TCHAISAAAGKAGAIVAAFGI. Residues 464 to 477 are Extracellular-facing; sequence QKLTYNSQVKSIKK. The chain crosses the membrane as a helical span at residues 478 to 498; it reads ALIILSITNMLGFFFTFLVPE. The Cytoplasmic segment spans residues 499–555; the sequence is TMGRSLEEISGEDGNTGAGGGGAPAAANAGVGVSASDVSRDEKFPASSTEWQTSMHA. Residues 506-555 form a disordered region; the sequence is EISGEDGNTGAGGGGAPAAANAGVGVSASDVSRDEKFPASSTEWQTSMHA. Residues 512-521 show a composition bias toward gly residues; it reads GNTGAGGGGA. Residues 522 to 535 show a composition bias toward low complexity; sequence PAAANAGVGVSASD. The span at 544-555 shows a compositional bias: polar residues; sequence ASSTEWQTSMHA.

Belongs to the major facilitator superfamily. Phosphate:H(+) symporter (TC 2.A.1.9) family.

It localises to the membrane. Functionally, symbiosis-specific regulated inorganic phosphate (Pi) transporter. Probably involved in symbiosis-mediated Pi uptake in roots colonized by myccorhizal fungi. This chain is Inorganic phosphate transporter 1-11 (PHT1-11), found in Oryza sativa subsp. japonica (Rice).